A 221-amino-acid chain; its full sequence is Carbonic anhydrase (221 aa).

Zn(2+) contacts are provided by Cys-38, Asp-40, His-99, and Cys-102.

This sequence belongs to the beta-class carbonic anhydrase family. Requires Zn(2+) as cofactor.

It catalyses the reaction hydrogencarbonate + H(+) = CO2 + H2O. This chain is Carbonic anhydrase (cynT), found in Helicobacter pylori (strain ATCC 700392 / 26695) (Campylobacter pylori).